A 504-amino-acid polypeptide reads, in one-letter code: Maturase K (504 aa).

Belongs to the intron maturase 2 family. MatK subfamily.

The protein localises to the plastid. It is found in the chloroplast. Usually encoded in the trnK tRNA gene intron. Probably assists in splicing its own and other chloroplast group II introns. This Wollastonia biflora (Beach sunflower) protein is Maturase K.